Reading from the N-terminus, the 156-residue chain is Small ribosomal subunit protein uS7 (156 aa).

It belongs to the universal ribosomal protein uS7 family. As to quaternary structure, part of the 30S ribosomal subunit. Contacts proteins S9 and S11.

One of the primary rRNA binding proteins, it binds directly to 16S rRNA where it nucleates assembly of the head domain of the 30S subunit. Is located at the subunit interface close to the decoding center, probably blocks exit of the E-site tRNA. The chain is Small ribosomal subunit protein uS7 from Beijerinckia indica subsp. indica (strain ATCC 9039 / DSM 1715 / NCIMB 8712).